A 166-amino-acid polypeptide reads, in one-letter code: Transcription antitermination protein NusB (166 aa).

Residues 1-18 (MISDESDRFNPRDPKPAD) are compositionally biased toward basic and acidic residues. The disordered stretch occupies residues 1 to 28 (MISDESDRFNPRDPKPADAGKPSKSAKR).

This sequence belongs to the NusB family.

In terms of biological role, involved in transcription antitermination. Required for transcription of ribosomal RNA (rRNA) genes. Binds specifically to the boxA antiterminator sequence of the ribosomal RNA (rrn) operons. This Pseudomonas putida (strain W619) protein is Transcription antitermination protein NusB.